A 275-amino-acid chain; its full sequence is 3-methyl-2-oxobutanoate hydroxymethyltransferase (275 aa).

Mg(2+) contacts are provided by aspartate 44 and aspartate 83. Residues 44-45, aspartate 83, and lysine 113 contribute to the 3-methyl-2-oxobutanoate site; that span reads DS. Glutamate 115 is a binding site for Mg(2+). Glutamate 182 functions as the Proton acceptor in the catalytic mechanism.

Belongs to the PanB family. As to quaternary structure, homodecamer; pentamer of dimers. Mg(2+) serves as cofactor.

The protein resides in the cytoplasm. It carries out the reaction 3-methyl-2-oxobutanoate + (6R)-5,10-methylene-5,6,7,8-tetrahydrofolate + H2O = 2-dehydropantoate + (6S)-5,6,7,8-tetrahydrofolate. It functions in the pathway cofactor biosynthesis; (R)-pantothenate biosynthesis; (R)-pantoate from 3-methyl-2-oxobutanoate: step 1/2. Its function is as follows. Catalyzes the reversible reaction in which hydroxymethyl group from 5,10-methylenetetrahydrofolate is transferred onto alpha-ketoisovalerate to form ketopantoate. The polypeptide is 3-methyl-2-oxobutanoate hydroxymethyltransferase (Clostridium botulinum (strain Alaska E43 / Type E3)).